The following is a 931-amino-acid chain: Netrin receptor UNC5C (931 aa).

A signal peptide spans 1–39 (MGKGLEGTAARCGLGMGYLLHSVVLPALAVLGASRPGSA). Residues 40-380 (AQDDDFFHEL…APDSDDVALY (341 aa)) lie on the Extracellular side of the membrane. In terms of domain architecture, Ig-like spans 62–159 (PHFLIEPEEA…AGTTKSRKAY (98 aa)). Cystine bridges form between C83-C144, C95-C142, C188-C239, C272-C309, C276-C313, C287-C299, C328-C362, C332-C367, and C340-C352. Residues 161 to 256 (RIAYLRKTFE…KRKSTTATVI (96 aa)) form the Ig-like C2-type domain. N236 carries N-linked (GlcNAc...) asparagine glycosylation. 2 consecutive TSP type-1 domains span residues 260 to 314 (NGGW…TLCP) and 316 to 368 (DGKW…GLCM). N-linked (GlcNAc...) asparagine glycosylation is present at N361. A helical transmembrane segment spans residues 381-401 (VGIVIAVIVCLAISVVVALFV). The Cytoplasmic portion of the chain corresponds to 402 to 931 (YRKNHRDFES…VVSLAAEGNY (530 aa)). Residues 530 to 664 (CTAFGTFNSL…EACHILTETL (135 aa)) form the ZU5 domain. The Death domain occupies 850–929 (QKLCSSLDAP…ETVVSLAAEG (80 aa)).

The protein belongs to the unc-5 family. In terms of tissue distribution, restricted to proprioceptive neurons.

Its subcellular location is the cell membrane. The protein resides in the cell surface. It is found in the synapse. It localises to the synaptosome. The protein localises to the cell projection. Its subcellular location is the axon. The protein resides in the dendrite. It is found in the growth cone. It localises to the lamellipodium. The protein localises to the filopodium. Receptor for netrin required for axon guidance. Mediates axon repulsion of neuronal growth cones in the developing nervous system upon ligand binding. Involved in dorsal root ganglion axon projection towards the spinal cord. The sequence is that of Netrin receptor UNC5C (UNC5C) from Gallus gallus (Chicken).